The chain runs to 234 residues: Membrane glycoprotein RL11 (234 aa).

Residues 1 to 23 form the signal peptide; that stretch reads MQTYSTPLTLIIVTSLFLFTTQG. A helical membrane pass occupies residues 183–203; that stretch reads LHCAWVSGLMIFVGALVICFL.

It is found in the host membrane. This Human cytomegalovirus (strain Merlin) (HHV-5) protein is Membrane glycoprotein RL11 (RL11).